The following is a 474-amino-acid chain: Trehalose-6-phosphate synthase (474 aa).

Arg10 contributes to the D-glucose 6-phosphate binding site. A UDP-alpha-D-glucose-binding site is contributed by 22–23 (GG). Tyr77 and Asp131 together coordinate D-glucose 6-phosphate. The UDP-alpha-D-glucose site is built by Arg263 and Lys268. Residue Arg301 participates in D-glucose 6-phosphate binding. Residues Phe340 and 366-370 (LVAKE) each bind UDP-alpha-D-glucose.

It belongs to the glycosyltransferase 20 family. As to quaternary structure, homotetramer.

The enzyme catalyses D-glucose 6-phosphate + UDP-alpha-D-glucose = alpha,alpha-trehalose 6-phosphate + UDP + H(+). Its pathway is glycan biosynthesis; trehalose biosynthesis. Its function is as follows. Probably involved in the osmoprotection via the biosynthesis of trehalose. Catalyzes the transfer of glucose from UDP-alpha-D-glucose (UDP-Glc) to D-glucose 6-phosphate (Glc-6-P) to form trehalose-6-phosphate. Acts with retention of the anomeric configuration of the UDP-sugar donor. This Klebsiella pneumoniae subsp. pneumoniae (strain ATCC 700721 / MGH 78578) protein is Trehalose-6-phosphate synthase.